A 20-amino-acid chain; its full sequence is Short cationic peptide-3a (20 aa).

The residue at position 20 (Glu20) is a Glutamic acid 1-amide.

In terms of tissue distribution, expressed by the venom gland.

The protein localises to the secreted. This is Short cationic peptide-3a from Cupiennius salei (American wandering spider).